Reading from the N-terminus, the 284-residue chain is Tropomyosin (284 aa).

The tract at residues 1-47 (MDAIKKKMQAMKIEKDNAMDRADAAEEKARQQQERVEKLEEELRDTQ) is disordered. The stretch at 1–284 (MDAIKKKMQA…DQTFQELSGY (284 aa)) forms a coiled coil. Residues 12–38 (KIEKDNAMDRADAAEEKARQQQERVEK) are compositionally biased toward basic and acidic residues.

It belongs to the tropomyosin family.

In terms of biological role, tropomyosin, in association with the troponin complex, plays a central role in the calcium dependent regulation of muscle contraction. This chain is Tropomyosin, found in Trichinella spiralis (Trichina worm).